The sequence spans 90 residues: Probable Fe(2+)-trafficking protein (90 aa).

This sequence belongs to the Fe(2+)-trafficking protein family.

In terms of biological role, could be a mediator in iron transactions between iron acquisition and iron-requiring processes, such as synthesis and/or repair of Fe-S clusters in biosynthetic enzymes. This chain is Probable Fe(2+)-trafficking protein, found in Marinobacter nauticus (strain ATCC 700491 / DSM 11845 / VT8) (Marinobacter aquaeolei).